A 329-amino-acid chain; its full sequence is UDP-3-O-acylglucosamine N-acyltransferase (329 aa).

The active-site Proton acceptor is His-224.

Belongs to the transferase hexapeptide repeat family. LpxD subfamily. In terms of assembly, homotrimer.

The enzyme catalyses a UDP-3-O-[(3R)-3-hydroxyacyl]-alpha-D-glucosamine + a (3R)-hydroxyacyl-[ACP] = a UDP-2-N,3-O-bis[(3R)-3-hydroxyacyl]-alpha-D-glucosamine + holo-[ACP] + H(+). The protein operates within bacterial outer membrane biogenesis; LPS lipid A biosynthesis. Its function is as follows. Catalyzes the N-acylation of UDP-3-O-acylglucosamine using 3-hydroxyacyl-ACP as the acyl donor. Is involved in the biosynthesis of lipid A, a phosphorylated glycolipid that anchors the lipopolysaccharide to the outer membrane of the cell. In Albidiferax ferrireducens (strain ATCC BAA-621 / DSM 15236 / T118) (Rhodoferax ferrireducens), this protein is UDP-3-O-acylglucosamine N-acyltransferase.